Consider the following 130-residue polypeptide: Small ribosomal subunit protein uS9 (130 aa).

Belongs to the universal ribosomal protein uS9 family.

The sequence is that of Small ribosomal subunit protein uS9 from Onion yellows phytoplasma (strain OY-M).